The sequence spans 208 residues: Transcription factor atf-4 homolog (208 aa).

Disordered stretches follow at residues 18-47 (HNQTHSTPQYHNHHHHHHQSPTYPQSYFNP) and 106-165 (ERRS…EKEE). The span at 110 to 120 (NSSASPASNWS) shows a compositional bias: low complexity. Basic and acidic residues predominate over residues 121–141 (SDEHDSQSEKSYHPYKTPEKK). The 64-residue stretch at 138–201 (PEKKERKKAQ…RYFKKFMTEM (64 aa)) folds into the bZIP domain. The segment at 140–163 (KKERKKAQNRLAATRYREKKRREK) is basic motif. Positions 173 to 187 (LSVTNGKLKDQVSEL) are leucine-zipper.

Belongs to the bZIP family.

The protein resides in the nucleus. Functionally, transcription factor. Involved in positively modulating longevity and stress tolerance, probably acting by positively regulating expression of transsulfuration enzyme cth-2, leading to increased hydrogen sulfide production and therefore increased protein persulfidation, a protective modification of redox-reactive cysteines. May mediate longevity and increased stress resistance induced by mTORC1 suppression. This chain is Transcription factor atf-4 homolog, found in Caenorhabditis elegans.